The primary structure comprises 127 residues: Histone H2B type 1-A (127 aa).

A disordered region spans residues 1–32 (MPEVSAKGTTISKKGFKKAVTKTQKKEGRKRK). Pro-2 bears the N-acetylproline mark. Lys-7, Lys-13, Lys-14, Lys-17, Lys-18, Lys-22, and Lys-25 each carry N6-acetyllysine; alternate. 8 positions are modified to N6-crotonyllysine; alternate: Lys-7, Lys-13, Lys-14, Lys-17, Lys-18, Lys-22, Lys-25, and Lys-36. N6-lactoyllysine; alternate is present on residues Lys-7 and Lys-13. Lys-7 participates in a covalent cross-link: Glycyl lysine isopeptide (Lys-Gly) (interchain with G-Cter in SUMO2); alternate. Residues Lys-17, Lys-18, Lys-22, and Lys-25 each carry the N6-lactoyllysine; alternate modification. Residue Lys-22 forms a Glycyl lysine isopeptide (Lys-Gly) (interchain with G-Cter in SUMO2); alternate linkage. At Lys-36 the chain carries N6-succinyllysine; alternate. Lys-36 participates in a covalent cross-link: Glycyl lysine isopeptide (Lys-Gly) (interchain with G-Cter in ubiquitin); alternate. Residue Ser-38 is modified to Phosphoserine. Position 45 is an N6-lactoyllysine; alternate (Lys-45). N6-methyllysine is present on Lys-48. An N6,N6-dimethyllysine modification is found at Lys-59. Arg-81 carries the post-translational modification Dimethylated arginine. Position 87 is an N6-acetyllysine; alternate (Lys-87). Lys-87 bears the N6-lactoyllysine; alternate mark. Residue Lys-87 is modified to N6,N6,N6-trimethyllysine; alternate. Residues Arg-88 and Arg-94 each carry the omega-N-methylarginine modification. Lys-110 bears the N6-lactoyllysine; alternate mark. At Lys-110 the chain carries N6-methyllysine. Thr-117 bears the Phosphothreonine mark. An N6-lactoyllysine; alternate mark is found at Lys-118 and Lys-122. Residues Lys-118 and Lys-122 each carry the N6-succinyllysine; alternate modification. Lys-118 is subject to N6-methylated lysine; alternate. Lys-122 participates in a covalent cross-link: Glycyl lysine isopeptide (Lys-Gly) (interchain with G-Cter in ubiquitin); alternate.

Belongs to the histone H2B family. In terms of assembly, the nucleosome is a histone octamer containing two molecules each of H2A, H2B, H3 and H4 assembled in one H3-H4 heterotetramer and two H2A-H2B heterodimers. In terms of processing, monoubiquitination at Lys-36 by the MSL1/MSL2 dimer is required for histone H3 'Lys-4' (H3K4me) and 'Lys-79' (H3K79me) methylation and transcription activation at specific gene loci, such as HOXA9 and MEIS1 loci. Similarly, monoubiquitination of Lys-122 (H2BK120Ub) by the RNF20/40 complex gives a specific tag for epigenetic transcriptional activation and is also prerequisite for histone H3 'Lys-4' and 'Lys-79' methylation. It also functions cooperatively with the FACT dimer to stimulate elongation by RNA polymerase II. H2BK120Ub also acts as a regulator of mRNA splicing: deubiquitination by USP49 is required for efficient cotranscriptional splicing of a large set of exons. Post-translationally, crotonylation (Kcr) is specifically present in male germ cells and marks testis-specific genes in post-meiotic cells, including X-linked genes that escape sex chromosome inactivation in haploid cells. Crotonylation marks active promoters and enhancers and confers resistance to transcriptional repressors. It is also associated with post-meiotically activated genes on autosomes. Acetylated during spermatogenesis. Acetylated form is most abundant in spermatogonia compared to spermatocytes and round spermatids. In terms of processing, phosphorylated at Thr-117 in spermatogonia, spermatocytes and round spermatids. Post-translationally, methylated at Lys-118 in spermatogonia, spermatocytes and round spermatids. Lactylated in macrophages by EP300/P300 by using lactoyl-CoA directly derived from endogenous or exogenous lactate, leading to stimulates gene transcription. In terms of tissue distribution, testis. Expressed in pachytene spermatocytes during meiotic prophase I in the absence of any significant DNA synthesis.

It localises to the nucleus. Its subcellular location is the chromosome. In terms of biological role, variant histone specifically required to direct the transformation of dissociating nucleosomes to protamine in male germ cells. Entirely replaces classical histone H2B prior nucleosome to protamine transition and probably acts as a nucleosome dissociating factor that creates a more dynamic chromatin, facilitating the large-scale exchange of histones. Core component of nucleosome. Nucleosomes wrap and compact DNA into chromatin, limiting DNA accessibility to the cellular machineries which require DNA as a template. Histones thereby play a central role in transcription regulation, DNA repair, DNA replication and chromosomal stability. DNA accessibility is regulated via a complex set of post-translational modifications of histones, also called histone code, and nucleosome remodeling. This is Histone H2B type 1-A from Rattus norvegicus (Rat).